The sequence spans 415 residues: uncharacterized protein (415 aa).

In terms of domain architecture, TRAM spans 1–52; that stretch reads MQDLTINAIGAQGDGLARTADGKPAFVPLTLPGEVVRAKMDGARGEVVEILA. 4 residues coordinate [4Fe-4S] cluster: C62, C68, C71, and C147. S-adenosyl-L-methionine contacts are provided by Q252, Y279, E299, and D347. Catalysis depends on C373, which acts as the Nucleophile.

Belongs to the class I-like SAM-binding methyltransferase superfamily. RNA M5U methyltransferase family.

This is an uncharacterized protein from Caulobacter vibrioides (strain ATCC 19089 / CIP 103742 / CB 15) (Caulobacter crescentus).